A 64-amino-acid polypeptide reads, in one-letter code: MRCVPVFVILLLLIASVPSVDAQLKTKDDMPLASSHANVKRTLQILRNKRCCITFESCCEFDLK.

Positions Met-1–Ser-19 are cleaved as a signal peptide. The propeptide occupies Val-20–Asn-48. 2 positions are modified to 4-carboxyglutamate: Glu-56 and Glu-60.

Post-translationally, contains 2 disulfide bonds that can be either 'C1-C3, C2-C4' or 'C1-C4, C2-C3', since these disulfide connectivities have been observed for conotoxins with cysteine framework V (for examples, see AC P0DQQ7 and AC P81755). In terms of tissue distribution, expressed by the venom duct.

The protein resides in the secreted. This is Conotoxin mr5.3 from Conus marmoreus (Marble cone).